A 252-amino-acid polypeptide reads, in one-letter code: Uracil-DNA glycosylase (252 aa).

Residue Asp-87 is the Proton acceptor of the active site.

Belongs to the uracil-DNA glycosylase (UDG) superfamily. UNG family.

Its subcellular location is the host nucleus. It catalyses the reaction Hydrolyzes single-stranded DNA or mismatched double-stranded DNA and polynucleotides, releasing free uracil.. In terms of biological role, excises uracil residues from the DNA which can arise as a result of misincorporation of dUMP residues by DNA polymerase or deamination of cytosines. Therefore may reduce deleterious uracil incorporation into the viral genome, particularly in terminally differentiated cells which lack DNA repair enzymes. In Alcelaphine herpesvirus 1 (strain C500) (AlHV-1), this protein is Uracil-DNA glycosylase (46).